Here is a 1238-residue protein sequence, read N- to C-terminus: DNA-directed RNA polymerase subunit beta (1238 aa).

The tract at residues 1186 to 1238 is disordered; it reads IEGREDTPPEEVYEEGYEEGFEEESEELPEDIDFEPDSFDIENDDLDLEDFDI. Acidic residues predominate over residues 1193 to 1238; sequence PPEEVYEEGYEEGFEEESEELPEDIDFEPDSFDIENDDLDLEDFDI.

It belongs to the RNA polymerase beta chain family. The RNAP catalytic core consists of 2 alpha, 1 beta, 1 beta' and 1 omega subunit. When a sigma factor is associated with the core the holoenzyme is formed, which can initiate transcription.

The enzyme catalyses RNA(n) + a ribonucleoside 5'-triphosphate = RNA(n+1) + diphosphate. Its function is as follows. DNA-dependent RNA polymerase catalyzes the transcription of DNA into RNA using the four ribonucleoside triphosphates as substrates. This is DNA-directed RNA polymerase subunit beta from Thermoanaerobacter sp. (strain X514).